Here is a 60-residue protein sequence, read N- to C-terminus: MFQRIGFPGVTNFQVLLALASLIPTPASRDFFRLPLTVGFTGAEIVNIEFECLRQLTPGM.

The protein is Colanic acid capsular biosynthesis activation protein B (rcsB) of Klebsiella aerogenes (Enterobacter aerogenes).